The following is a 380-amino-acid chain: Guanine nucleotide-binding protein subunit beta (380 aa).

7 WD repeats span residues Gly64–Asn94, Leu106–Asn136, Gly155–Asp186, Gly203–Asp234, Gly247–Asp277, Asn296–Asp326, and Ser342–Ala372.

This sequence belongs to the WD repeat G protein beta family. As to quaternary structure, g proteins are composed of 3 units, alpha, beta and gamma. Present in the root, leaf and tassel.

In terms of biological role, guanine nucleotide-binding proteins (G proteins) are involved as a modulator or transducer in various transmembrane signaling systems. The beta and gamma chains are required for the GTPase activity, for replacement of GDP by GTP, and for G protein-effector interaction. The sequence is that of Guanine nucleotide-binding protein subunit beta (GB1) from Zea mays (Maize).